Here is a 123-residue protein sequence, read N- to C-terminus: DIDTLVDMVQQRLANHQPQPSLLHGDLWSGNCALGPDGPYIFDPACYWGDRECDLAMLPMHPEQPPQIYDGYQSVSPLPSGFLDRQPIYQLYTLLNRAILFGGQHLVTAAQQALDDVLMEKMR.

Catalysis depends on D26, which acts as the Proton acceptor.

This sequence belongs to the fructosamine kinase family.

Ketoamine kinase that phosphorylates ketoamines on the third carbon of the sugar moiety to generate ketoamine 3-phosphate. The chain is Probable ketoamine kinase in tonB 3'region from Klebsiella pneumoniae.